We begin with the raw amino-acid sequence, 278 residues long: Probable esterase TOX9 (278 aa).

Residues Ser119, Asp222, and His250 each act as charge relay system in the active site.

This sequence belongs to the LovG family.

It participates in mycotoxin biosynthesis. In terms of biological role, probable esterase; part of the Tox1A locus, one of the 2 loci that mediate the biosynthesis of T-toxin, a family of linear polyketides 37 to 45 carbons in length, of which the major component is 41 carbons, and which leads to high virulence to maize. One of the PKSs (PKS1 or PKS2) could synthesize a precursor, used subsequently by the other PKS as starter unit, to add additional carbons. Variability in the length of the final carbon backbone C35-47 could be achieved by varying the number of condensation cycles, or use of different starter or extender units or might be due to decarboxylation of the penultimate product, catalyzed by DEC1. Additional proteins are required for the biosynthesis of T-toxin, including oxidoreductases RED1, RED2, RED3, LAM1 and OXI1, as well as esterase TOX9. This chain is Probable esterase TOX9, found in Cochliobolus heterostrophus (strain C4 / ATCC 48331 / race T) (Southern corn leaf blight fungus).